The following is a 90-amino-acid chain: c-Myc-binding protein homolog (90 aa).

It belongs to the AMY1 family.

Its subcellular location is the nucleus. This is c-Myc-binding protein homolog (mycbp) from Dictyostelium discoideum (Social amoeba).